Consider the following 533-residue polypeptide: Retinoic acid receptor RXR-beta (533 aa).

A disordered region spans residues 1–23 (MSWAARPPFLPQRHAAGQCGPVG). Positions 1–204 (MSWAARPPFL…PGGPGAGKRL (204 aa)) are modulating. Position 25 is an omega-N-methylarginine (Arg-25). The disordered stretch occupies residues 36-181 (WRRRRPWLDP…GSGPPEDVKP (146 aa)). A compositionally biased stretch (low complexity) spans 46 to 61 (AAAAAAAVAGGEQQTP). Over residues 67–82 (EAGRDGMGDSGRDSRS) the composition is skewed to basic and acidic residues. 2 stretches are compositionally biased toward pro residues: residues 89 to 109 (NPLP…PPST) and 118 to 131 (APPP…PLGS). Positions 132 to 143 (PFPVISSSMGSP) are enriched in low complexity. Positions 144–153 (GLPPPAPPGF) are enriched in pro residues. 2 consecutive NR C4-type zinc fingers follow at residues 205 to 225 (CAIC…CEGC) and 241 to 265 (CRDN…YQKC). The segment at residues 205 to 270 (CAICGDRSSG…RYQKCLATGM (66 aa)) is a DNA-binding region (nuclear receptor). The tract at residues 271–295 (KREAVQEERQRGKDKDGDGEGAGGA) is hinge. Positions 276–288 (QEERQRGKDKDGD) are enriched in basic and acidic residues. Disordered stretches follow at residues 276–299 (QEER…PEEM) and 313–336 (QKSD…NDPV). One can recognise an NR LBD domain in the interval 296–529 (PEEMPVDRIL…TFLMEMLEAP (234 aa)). Residues 320–329 (EGPGGTGGSG) show a composition bias toward gly residues.

The protein belongs to the nuclear hormone receptor family. NR2 subfamily. Homodimer (in vitro). Heterodimer with other retinoic acid receptor family members. Binds DNA preferentially as a RAR/RXR heterodimer. Interacts with NR1H3. Interacts with AKAP13. Expressed in aortic endothelial cells (at protein level). Expressed in monocytes. Expressed in a variety of tumor cell lines.

It localises to the nucleus. Its subcellular location is the cytoplasm. Its function is as follows. Receptor for retinoic acid. Retinoic acid receptors bind as heterodimers to their target response elements in response to their ligands, all-trans or 9-cis retinoic acid, and regulate gene expression in various biological processes. The RAR/RXR heterodimers bind to the retinoic acid response elements (RARE). The protein is Retinoic acid receptor RXR-beta (RXRB) of Homo sapiens (Human).